Here is a 144-residue protein sequence, read N- to C-terminus: Transcription antitermination protein NusB (144 aa).

The protein belongs to the NusB family.

Involved in transcription antitermination. Required for transcription of ribosomal RNA (rRNA) genes. Binds specifically to the boxA antiterminator sequence of the ribosomal RNA (rrn) operons. The chain is Transcription antitermination protein NusB from Buchnera aphidicola subsp. Baizongia pistaciae (strain Bp).